A 474-amino-acid polypeptide reads, in one-letter code: Ribulose bisphosphate carboxylase large chain (474 aa).

Positions 122 and 172 each coordinate substrate. Catalysis depends on K174, which acts as the Proton acceptor. K176 serves as a coordination point for substrate. Positions 200, 202, and 203 each coordinate Mg(2+). Position 200 is an N6-carboxylysine (K200). H293 acts as the Proton acceptor in catalysis. Substrate-binding residues include R294, H326, and S378.

The protein belongs to the RuBisCO large chain family. Type I subfamily. In terms of assembly, heterohexadecamer of 8 large chains and 8 small chains; disulfide-linked. The disulfide link is formed within the large subunit homodimers. It depends on Mg(2+) as a cofactor. Post-translationally, the disulfide bond which can form in the large chain dimeric partners within the hexadecamer appears to be associated with oxidative stress and protein turnover.

It is found in the carboxysome. The enzyme catalyses 2 (2R)-3-phosphoglycerate + 2 H(+) = D-ribulose 1,5-bisphosphate + CO2 + H2O. It catalyses the reaction D-ribulose 1,5-bisphosphate + O2 = 2-phosphoglycolate + (2R)-3-phosphoglycerate + 2 H(+). RuBisCO catalyzes two reactions: the carboxylation of D-ribulose 1,5-bisphosphate, the primary event in carbon dioxide fixation, as well as the oxidative fragmentation of the pentose substrate in the photorespiration process. Both reactions occur simultaneously and in competition at the same active site. This Synechococcus sp. (strain JA-3-3Ab) (Cyanobacteria bacterium Yellowstone A-Prime) protein is Ribulose bisphosphate carboxylase large chain.